We begin with the raw amino-acid sequence, 281 residues long: Bifunctional protein FolD (281 aa).

NADP(+) contacts are provided by residues 165 to 167 (GRG), threonine 192, and valine 233.

This sequence belongs to the tetrahydrofolate dehydrogenase/cyclohydrolase family. Homodimer.

It carries out the reaction (6R)-5,10-methylene-5,6,7,8-tetrahydrofolate + NADP(+) = (6R)-5,10-methenyltetrahydrofolate + NADPH. The catalysed reaction is (6R)-5,10-methenyltetrahydrofolate + H2O = (6R)-10-formyltetrahydrofolate + H(+). Its pathway is one-carbon metabolism; tetrahydrofolate interconversion. Functionally, catalyzes the oxidation of 5,10-methylenetetrahydrofolate to 5,10-methenyltetrahydrofolate and then the hydrolysis of 5,10-methenyltetrahydrofolate to 10-formyltetrahydrofolate. In Mycobacteroides abscessus (strain ATCC 19977 / DSM 44196 / CCUG 20993 / CIP 104536 / JCM 13569 / NCTC 13031 / TMC 1543 / L948) (Mycobacterium abscessus), this protein is Bifunctional protein FolD.